A 227-amino-acid chain; its full sequence is Ribonuclease HII (227 aa).

The 210-residue stretch at 1-210 folds into the RNase H type-2 domain; it reads MKLAGIDEAG…LKKIEEKLAK (210 aa). A divalent metal cation-binding residues include Asp-7, Glu-8, and Asp-105.

Belongs to the RNase HII family. Mn(2+) is required as a cofactor. Requires Mg(2+) as cofactor.

Its subcellular location is the cytoplasm. It catalyses the reaction Endonucleolytic cleavage to 5'-phosphomonoester.. In terms of biological role, endonuclease that specifically degrades the RNA of RNA-DNA hybrids. The sequence is that of Ribonuclease HII from Thermococcus onnurineus (strain NA1).